A 319-amino-acid chain; its full sequence is MTTQTSTGLRHQTVLLDEAVDALIWRDDGIYIDGTFGRGGHSRRILERLGPGGRLVAFDKDPAAITEAGTVEDARFAIEHDSFAQMARCLDARGVEQVAGVLLDLGISSPQIDEGARGFSFRMDGPLDMRMDTTRGITAAQWLAEADERDIARVIRDYGEERFAVQIAKAIVARRGQSGDRGPLDRTSELAALVAQAVKTREKGQDPATRTFQALRIHVNQELADLETGLKAAFDRLEQGGRLVVISFHSLEDRIVKRFMQALARPEQSAAPELRRAPLRAHELPAPQLRLLGRVKPSEAEVSANPRARSAIMRVAERC.

Residues 39–41 (GGH), Asp59, Phe83, Asp104, and Gln111 each bind S-adenosyl-L-methionine.

It belongs to the methyltransferase superfamily. RsmH family.

It localises to the cytoplasm. The enzyme catalyses cytidine(1402) in 16S rRNA + S-adenosyl-L-methionine = N(4)-methylcytidine(1402) in 16S rRNA + S-adenosyl-L-homocysteine + H(+). In terms of biological role, specifically methylates the N4 position of cytidine in position 1402 (C1402) of 16S rRNA. The polypeptide is Ribosomal RNA small subunit methyltransferase H (Ralstonia pickettii (strain 12J)).